Consider the following 89-residue polypeptide: Small ribosomal subunit protein uS19 (89 aa).

This sequence belongs to the universal ribosomal protein uS19 family.

Its function is as follows. Protein S19 forms a complex with S13 that binds strongly to the 16S ribosomal RNA. The protein is Small ribosomal subunit protein uS19 of Rhodopirellula baltica (strain DSM 10527 / NCIMB 13988 / SH1).